A 367-amino-acid chain; its full sequence is UDP-N-acetylglucosamine--N-acetylmuramyl-(pentapeptide) pyrophosphoryl-undecaprenol N-acetylglucosamine transferase (367 aa).

Residues 15-17 (TGG), asparagine 126, arginine 169, serine 197, and glutamine 298 each bind UDP-N-acetyl-alpha-D-glucosamine.

It belongs to the glycosyltransferase 28 family. MurG subfamily.

It localises to the cell inner membrane. It carries out the reaction di-trans,octa-cis-undecaprenyl diphospho-N-acetyl-alpha-D-muramoyl-L-alanyl-D-glutamyl-meso-2,6-diaminopimeloyl-D-alanyl-D-alanine + UDP-N-acetyl-alpha-D-glucosamine = di-trans,octa-cis-undecaprenyl diphospho-[N-acetyl-alpha-D-glucosaminyl-(1-&gt;4)]-N-acetyl-alpha-D-muramoyl-L-alanyl-D-glutamyl-meso-2,6-diaminopimeloyl-D-alanyl-D-alanine + UDP + H(+). It participates in cell wall biogenesis; peptidoglycan biosynthesis. Cell wall formation. Catalyzes the transfer of a GlcNAc subunit on undecaprenyl-pyrophosphoryl-MurNAc-pentapeptide (lipid intermediate I) to form undecaprenyl-pyrophosphoryl-MurNAc-(pentapeptide)GlcNAc (lipid intermediate II). This Bradyrhizobium sp. (strain BTAi1 / ATCC BAA-1182) protein is UDP-N-acetylglucosamine--N-acetylmuramyl-(pentapeptide) pyrophosphoryl-undecaprenol N-acetylglucosamine transferase.